Reading from the N-terminus, the 349-residue chain is Transmembrane protein 255A (349 aa).

The next 4 helical transmembrane spans lie at 30–50 (IYVTVTLLIVSVLILTVGLAA), 57–77 (VTVGGYYPGVILGFGSFLGII), 89–109 (LVASIVFISFGVIAAFCCAIV), and 226–246 (TILNIVGLFLGIITAAVLGGF). The disordered stretch occupies residues 303–329 (PSSPPSGLSDEPQSASPSPSYMWSSSA). Residues 316 to 329 (SASPSPSYMWSSSA) are compositionally biased toward low complexity.

This sequence belongs to the TMEM255 family.

Its subcellular location is the membrane. This Homo sapiens (Human) protein is Transmembrane protein 255A (TMEM255A).